The following is a 234-amino-acid chain: Ubiquinone biosynthesis O-methyltransferase (234 aa).

S-adenosyl-L-methionine contacts are provided by arginine 37, glycine 56, aspartate 77, and methionine 121.

The protein belongs to the methyltransferase superfamily. UbiG/COQ3 family.

The enzyme catalyses a 3-demethylubiquinol + S-adenosyl-L-methionine = a ubiquinol + S-adenosyl-L-homocysteine + H(+). It carries out the reaction a 3-(all-trans-polyprenyl)benzene-1,2-diol + S-adenosyl-L-methionine = a 2-methoxy-6-(all-trans-polyprenyl)phenol + S-adenosyl-L-homocysteine + H(+). The protein operates within cofactor biosynthesis; ubiquinone biosynthesis. O-methyltransferase that catalyzes the 2 O-methylation steps in the ubiquinone biosynthetic pathway. This Aromatoleum aromaticum (strain DSM 19018 / LMG 30748 / EbN1) (Azoarcus sp. (strain EbN1)) protein is Ubiquinone biosynthesis O-methyltransferase.